Here is a 59-residue protein sequence, read N- to C-terminus: Large ribosomal subunit protein bL32c (59 aa).

The disordered stretch occupies residues 37–59 (SRSFSRGNEHPKPKGFSGQQANK).

It belongs to the bacterial ribosomal protein bL32 family.

The protein localises to the plastid. It is found in the chloroplast. The protein is Large ribosomal subunit protein bL32c (rpl32) of Zea mays (Maize).